The following is a 337-amino-acid chain: Thymidylate synthase (337 aa).

DUMP contacts are provided by residues arginine 74 and 199 to 200; that span reads RR. Residue cysteine 219 is the Nucleophile of the active site. DUMP is bound by residues 239–242, asparagine 250, and 280–282; these read RSGD and HIY. Aspartate 242 provides a ligand contact to (6R)-5,10-methylene-5,6,7,8-tetrahydrofolate. Alanine 336 serves as a coordination point for (6R)-5,10-methylene-5,6,7,8-tetrahydrofolate.

It belongs to the thymidylate synthase family. Homodimer.

It catalyses the reaction dUMP + (6R)-5,10-methylene-5,6,7,8-tetrahydrofolate = 7,8-dihydrofolate + dTMP. It functions in the pathway pyrimidine metabolism; dTTP biosynthesis. The polypeptide is Thymidylate synthase (70) (Homo sapiens (Human)).